Reading from the N-terminus, the 246-residue chain is Type III pantothenate kinase (246 aa).

6 to 13 (DVGNSRIK) is an ATP binding site. Residues Tyr93 and 100–103 (GSDR) contribute to the substrate site. Asp102 functions as the Proton acceptor in the catalytic mechanism. Residue Thr125 participates in ATP binding. A substrate-binding site is contributed by Thr175.

The protein belongs to the type III pantothenate kinase family. Homodimer. NH4(+) is required as a cofactor. The cofactor is K(+).

It localises to the cytoplasm. It catalyses the reaction (R)-pantothenate + ATP = (R)-4'-phosphopantothenate + ADP + H(+). It functions in the pathway cofactor biosynthesis; coenzyme A biosynthesis; CoA from (R)-pantothenate: step 1/5. Its function is as follows. Catalyzes the phosphorylation of pantothenate (Pan), the first step in CoA biosynthesis. The protein is Type III pantothenate kinase of Dichelobacter nodosus (strain VCS1703A).